The primary structure comprises 569 residues: MTAIESFDNIYLDLSKESGKCRFAETGFGWKPVGGGDTFTLDHNNIASAQWSRAAKGYEIKIVQRSKSGIIQLDGFQQEDYDRLAKVFKNWYSTVLESKEHALRGWNWGKAEFSKSELTFSVQNRPAFELPYSEIGNTNLAGRNEVAVEMALPESGANAQLGGARSKGSKAAAGRDQLVEMRFYIPGVTTRKEAEGEDAGSDAGNDEQEKNAATLFYETLIDKAEIGETAGDTIATFLDVLHLTPRGRFDIDMYEASFRLRGKTYDYKIQYEAIKKFMVLPKPDEVHYMLVMGLDPPLRQGQTRYPFVVMQFKKDEEVTIDLNLNEEELKSKYQDKLEPHYEEPLHQVVAKIFRGLGNRKISSPAKDFITHRNQYGIKCSIKASEGFLYCLEKAFMFVPKPATYIAYEQTQSVTFSRVSGAVSALSTFDITVLLKNGAGSSQFSNISREDLKALESFFKLKGLRVKNEIDEDANLLAAAMNQQMDDSEDEVAAKADRGSADEDEESVDEDFRTDSESDVAEEYDSAHESDGSGSDESNVDDDEQDDDDDDDDDDGEDEDERPKKKKKTG.

The interval 482-569 (QQMDDSEDEV…ERPKKKKKTG (88 aa)) is disordered. Positions 491–500 (VAAKADRGSA) are enriched in basic and acidic residues. The span at 537 to 559 (SNVDDDEQDDDDDDDDDDGEDED) shows a compositional bias: acidic residues.

This sequence belongs to the SSRP1 family. Forms a stable heterodimer with SPT16. The SPT16-POB3 dimer weakly associates with multiple molecules of NHP6 to form the FACT complex.

The protein localises to the nucleus. The protein resides in the chromosome. In terms of biological role, component of the FACT complex, a general chromatin factor that acts to reorganize nucleosomes. The FACT complex is involved in multiple processes that require DNA as a template such as mRNA elongation, DNA replication and DNA repair. During transcription elongation the FACT complex acts as a histone chaperone that both destabilizes and restores nucleosomal structure. It facilitates the passage of RNA polymerase II and transcription by promoting the dissociation of one histone H2A-H2B dimer from the nucleosome, then subsequently promotes the reestablishment of the nucleosome following the passage of RNA polymerase II. This Gibberella zeae (strain ATCC MYA-4620 / CBS 123657 / FGSC 9075 / NRRL 31084 / PH-1) (Wheat head blight fungus) protein is FACT complex subunit POB3 (POB3).